Reading from the N-terminus, the 374-residue chain is Type II methyltransferase M.NgoFVII (374 aa).

The SAM-dependent MTase C5-type domain occupies proline 16 to asparagine 344. The active site involves cysteine 88.

Belongs to the class I-like SAM-binding methyltransferase superfamily. C5-methyltransferase family.

The enzyme catalyses a 2'-deoxycytidine in DNA + S-adenosyl-L-methionine = a 5-methyl-2'-deoxycytidine in DNA + S-adenosyl-L-homocysteine + H(+). Its function is as follows. A methylase, recognizes the double-stranded sequence 5'-GCSGC-3', methylates C-5 on both strands, and protects the DNA from cleavage by the NgoFVII endonuclease. This Neisseria gonorrhoeae protein is Type II methyltransferase M.NgoFVII (ngoFVIIM).